The chain runs to 325 residues: uncharacterized protein (325 aa).

2 disordered regions span residues 32-65 and 99-152; these read LSTP…VPPI and GDSL…ASSG. One can recognise a Globin domain in the interval 153 to 291; it reads LVPSLNRLRI…LFTGVRDGYY (139 aa).

This is an uncharacterized protein from Caenorhabditis elegans.